The sequence spans 550 residues: Arginine--tRNA ligase (550 aa).

Positions 124 to 134 (ANPTGPLHVGH) match the 'HIGH' region motif.

The protein belongs to the class-I aminoacyl-tRNA synthetase family. As to quaternary structure, monomer.

The protein localises to the cytoplasm. The enzyme catalyses tRNA(Arg) + L-arginine + ATP = L-arginyl-tRNA(Arg) + AMP + diphosphate. This is Arginine--tRNA ligase from Desulfovibrio desulfuricans (strain ATCC 27774 / DSM 6949 / MB).